Here is a 170-residue protein sequence, read N- to C-terminus: Protein SprT (170 aa).

In terms of domain architecture, SprT-like spans 25–165 (SEQFFDRTFA…QYCKGRLEPV (141 aa)). His-78 provides a ligand contact to Zn(2+). The active site involves Glu-79. His-82 serves as a coordination point for Zn(2+).

The protein belongs to the SprT family. Zn(2+) is required as a cofactor.

It is found in the cytoplasm. In Actinobacillus succinogenes (strain ATCC 55618 / DSM 22257 / CCUG 43843 / 130Z), this protein is Protein SprT.